The chain runs to 162 residues: Allophycocyanin alpha-B chain (162 aa).

Asn-71 is modified (N4-methylasparagine). Cys-81 contacts (2R,3E)-phycocyanobilin.

This sequence belongs to the phycobiliprotein family. Contains one covalently linked phycocyanobilin chromophore.

Its subcellular location is the plastid. It is found in the cyanelle thylakoid membrane. Functionally, allophycocyanin is a photosynthetic bile pigment-protein complex with maximum absorption at approximately 650 nanometers. The polypeptide is Allophycocyanin alpha-B chain (apcD) (Cyanophora paradoxa).